The chain runs to 943 residues: Lactoferrin-binding protein A (943 aa).

The signal sequence occupies residues 1-27; that stretch reads MNKKHGFPLTLTALAIATAFPAYAAQA. The region spanning 52–178 is the TBDR plug domain; the sequence is RRSKEATGLG…LGGAVAFRTK (127 aa). One can recognise a TBDR beta-barrel domain in the interval 189–943; that stretch reads SWGIQAKTAY…NFSLALEMKF (755 aa). The short motif at 926–943 is the TonB C-terminal box element; that stretch reads GRYAAPGRNFSLALEMKF.

It belongs to the TonB-dependent receptor family.

It localises to the cell outer membrane. Functionally, unknown. May be an iron-siderophore receptor. The protein is Lactoferrin-binding protein A (lbpA) of Neisseria meningitidis serogroup B (strain ATCC BAA-335 / MC58).